A 274-amino-acid chain; its full sequence is SPbeta prophage-derived UPF0714 protein YoqZ (274 aa).

The protein belongs to the UPF0714 family.

This Bacillus subtilis (strain 168) protein is SPbeta prophage-derived UPF0714 protein YoqZ (yoqZ).